Consider the following 269-residue polypeptide: MASSVRAPSGSVIAVASSSSSAALAGVCGTGSPCAACKFLRRKCQPDCVFAPYFPPDNPQKFVRVHRVFGASNVTKLMNEIHPLQREDAMNSLAYEADMRIRDPVYGCVGVISILQHNLRQLQQDLARAKYELSKYQAAAAASASTAPTGPQAMAEFIGSAMPNGAAHNFINLGHSAALGSLGGSTAMFGQQEQFGSNAQMLSRSYDGGEPIARIGMNNGGYEFGYSSATTMGGSAGAVSGGLGTLGISSPPFLKSGTAGGDEKPSGGY.

The region spanning 32-133 (SPCAACKFLR…QDLARAKYEL (102 aa)) is the LOB domain.

It belongs to the LOB domain-containing protein family. Expressed in leaves, leaf primordia, immature ears, immature tassels, whole ovules, silk and husk leaves.

The protein resides in the nucleus. The protein is Protein IAL1 of Zea mays (Maize).